Consider the following 410-residue polypeptide: Bifunctional malic/malolactic enzyme (410 aa).

Tyr-36 (proton donor) is an active-site residue. Residue Lys-91 is the Proton acceptor of the active site. Glu-133, Asp-134, and Asp-159 together coordinate a divalent metal cation. NADP(+) is bound by residues 192–195 (AGAA), Asn-286, and Asn-317.

It belongs to the malic enzymes family. In terms of assembly, interacts with BrxC. It depends on Mg(2+) as a cofactor. The cofactor is Mn(2+).

It catalyses the reaction (S)-malate + NADP(+) = pyruvate + CO2 + NADPH. It carries out the reaction oxaloacetate + H(+) = pyruvate + CO2. The enzyme catalyses (S)-malate + H(+) = (S)-lactate + CO2. With respect to regulation, NADPH is a strong modulator that switches activity from a pyruvate-producing malic enzyme to a lactate-generating malolactic enzyme. Its function is as follows. Bifunctional enzyme with both malic and malolactic enzyme activities. In the absence of NADPH, catalyzes the reversible decarboxylation of malate to pyruvate. Can use NAD and NADP, but with a very strong preference for NADP. In the presence of excess NADPH, catalyzes the non-oxidative decarboxylation of malate to lactate. During growth on glucose, contributes to NADPH balancing via oxidation of the NADPH produced in excess by other enzymatic reactions. Can also catalyze the decarboxylation of oxaloacetate. The polypeptide is Bifunctional malic/malolactic enzyme (ytsJ) (Bacillus subtilis (strain 168)).